Reading from the N-terminus, the 268-residue chain is tRNA pseudouridine synthase A (268 aa).

Catalysis depends on Asp-52, which acts as the Nucleophile. Residue Tyr-113 coordinates substrate.

This sequence belongs to the tRNA pseudouridine synthase TruA family. As to quaternary structure, homodimer.

The enzyme catalyses uridine(38/39/40) in tRNA = pseudouridine(38/39/40) in tRNA. Formation of pseudouridine at positions 38, 39 and 40 in the anticodon stem and loop of transfer RNAs. This chain is tRNA pseudouridine synthase A, found in Rhizobium leguminosarum bv. trifolii (strain WSM2304).